The following is a 478-amino-acid chain: Noelin-3 (478 aa).

An N-terminal signal peptide occupies residues 1 to 23 (MSPPLLKLGAVLSTMAMISNWMS). Asparagine 33, asparagine 95, asparagine 179, asparagine 299, and asparagine 465 each carry an N-linked (GlcNAc...) asparagine glycan. A coiled-coil region spans residues 77–217 (CSRDAKSRQL…TRLRDCMKKL (141 aa)). In terms of domain architecture, Olfactomedin-like spans 218 to 470 (TCGKLMKITG…QVLFNVTLFH (253 aa)). An intrachain disulfide couples cysteine 219 to cysteine 401.

Peripherally associated with AMPAR complex. AMPAR complex consists of an inner core made of 4 pore-forming GluA/GRIA proteins (GRIA1, GRIA2, GRIA3 and GRIA4) and 4 major auxiliary subunits arranged in a twofold symmetry. One of the two pairs of distinct binding sites is occupied either by CNIH2, CNIH3 or CACNG2, CACNG3. The other harbors CACNG2, CACNG3, CACNG4, CACNG8 or GSG1L. This inner core of AMPAR complex is complemented by outer core constituents binding directly to the GluA/GRIA proteins at sites distinct from the interaction sites of the inner core constituents. Outer core constituents include at least PRRT1, PRRT2, CKAMP44/SHISA9, FRRS1L and NRN1. The proteins of the inner and outer core serve as a platform for other, more peripherally associated AMPAR constituents, including OLFM3. Alone or in combination, these auxiliary subunits control the gating and pharmacology of the AMPAR complex and profoundly impact their biogenesis and protein processing. Homodimer. Interacts with MYOC. Interacts with OLFM2. In the eye, expressed in trabecular meshwork and neural retina; in non-ocular tissues, expressed in brain and lung.

The protein localises to the secreted. It localises to the synapse. This is Noelin-3 (OLFM3) from Homo sapiens (Human).